Here is a 314-residue protein sequence, read N- to C-terminus: Ribosomal RNA small subunit methyltransferase H (314 aa).

S-adenosyl-L-methionine-binding positions include 37-39 (GSH), aspartate 57, phenylalanine 84, aspartate 105, and glutamine 112.

The protein belongs to the methyltransferase superfamily. RsmH family.

The protein localises to the cytoplasm. It carries out the reaction cytidine(1402) in 16S rRNA + S-adenosyl-L-methionine = N(4)-methylcytidine(1402) in 16S rRNA + S-adenosyl-L-homocysteine + H(+). In terms of biological role, specifically methylates the N4 position of cytidine in position 1402 (C1402) of 16S rRNA. The chain is Ribosomal RNA small subunit methyltransferase H from Fusobacterium nucleatum subsp. nucleatum (strain ATCC 25586 / DSM 15643 / BCRC 10681 / CIP 101130 / JCM 8532 / KCTC 2640 / LMG 13131 / VPI 4355).